Here is an 85-residue protein sequence, read N- to C-terminus: UPF0181 protein YPO1774/y2534/YP_1619 (85 aa).

Residues 50 to 85 form a disordered region; it reads QAMAIFEDHDFDEHTESDYRRDDEPDADDIEDPYEG. The span at 55–72 shows a compositional bias: basic and acidic residues; the sequence is FEDHDFDEHTESDYRRDD. Positions 73–85 are enriched in acidic residues; it reads EPDADDIEDPYEG.

This sequence belongs to the UPF0181 family.

This Yersinia pestis protein is UPF0181 protein YPO1774/y2534/YP_1619.